A 280-amino-acid polypeptide reads, in one-letter code: Ribosomal RNA small subunit methyltransferase A (280 aa).

Residues N30, V32, G57, E78, D108, and N125 each coordinate S-adenosyl-L-methionine.

It belongs to the class I-like SAM-binding methyltransferase superfamily. rRNA adenine N(6)-methyltransferase family. RsmA subfamily.

Its subcellular location is the cytoplasm. It carries out the reaction adenosine(1518)/adenosine(1519) in 16S rRNA + 4 S-adenosyl-L-methionine = N(6)-dimethyladenosine(1518)/N(6)-dimethyladenosine(1519) in 16S rRNA + 4 S-adenosyl-L-homocysteine + 4 H(+). Functionally, specifically dimethylates two adjacent adenosines (A1518 and A1519) in the loop of a conserved hairpin near the 3'-end of 16S rRNA in the 30S particle. May play a critical role in biogenesis of 30S subunits. The chain is Ribosomal RNA small subunit methyltransferase A from Leifsonia xyli subsp. xyli (strain CTCB07).